Here is a 330-residue protein sequence, read N- to C-terminus: Ketol-acid reductoisomerase (NADP(+)) (330 aa).

A KARI N-terminal Rossmann domain is found at 1-181; that stretch reads MNAYYEQDAD…GGTKAGVIET (181 aa). Residues 24–27, arginine 47, serine 50, serine 52, and 82–85 each bind NADP(+); these read FGSQ and DQYQ. Histidine 107 is a catalytic residue. Glycine 133 lines the NADP(+) pocket. Positions 182–327 constitute a KARI C-terminal knotted domain; that stretch reads TFKNETETDL…AKLRDMMSWL (146 aa). Mg(2+)-binding residues include aspartate 190, glutamate 194, glutamate 226, and glutamate 230. Residue serine 251 coordinates substrate.

This sequence belongs to the ketol-acid reductoisomerase family. The cofactor is Mg(2+).

The enzyme catalyses (2R)-2,3-dihydroxy-3-methylbutanoate + NADP(+) = (2S)-2-acetolactate + NADPH + H(+). The catalysed reaction is (2R,3R)-2,3-dihydroxy-3-methylpentanoate + NADP(+) = (S)-2-ethyl-2-hydroxy-3-oxobutanoate + NADPH + H(+). It functions in the pathway amino-acid biosynthesis; L-isoleucine biosynthesis; L-isoleucine from 2-oxobutanoate: step 2/4. It participates in amino-acid biosynthesis; L-valine biosynthesis; L-valine from pyruvate: step 2/4. Functionally, involved in the biosynthesis of branched-chain amino acids (BCAA). Catalyzes an alkyl-migration followed by a ketol-acid reduction of (S)-2-acetolactate (S2AL) to yield (R)-2,3-dihydroxy-isovalerate. In the isomerase reaction, S2AL is rearranged via a Mg-dependent methyl migration to produce 3-hydroxy-3-methyl-2-ketobutyrate (HMKB). In the reductase reaction, this 2-ketoacid undergoes a metal-dependent reduction by NADPH to yield (R)-2,3-dihydroxy-isovalerate. This is Ketol-acid reductoisomerase (NADP(+)) from Chlorobium phaeobacteroides (strain BS1).